Here is a 537-residue protein sequence, read N- to C-terminus: Sodium/hydrogen exchanger 9B2 (537 aa).

Over residues 1-10 (MGDEDKRITY) the composition is skewed to basic and acidic residues. Residues 1-28 (MGDEDKRITYEDSEPSTGMNYTPSMHQE) form a disordered region. The Cytoplasmic portion of the chain corresponds to 1–86 (MGDEDKRITY…ACPPHGLLDR (86 aa)). Residues 15–27 (PSTGMNYTPSMHQ) show a composition bias toward polar residues. S49 is subject to Phosphoserine. Residues 87-104 (VITNVTIIVLLWAVVWSI) form a helical membrane-spanning segment. The Extracellular portion of the chain corresponds to 105-113 (TGSECLPGG). A helical membrane pass occupies residues 114–133 (NLFGIIILFYCAIIGGKLLG). The Cytoplasmic segment spans residues 134–144 (LIKLPTLPPLP). The helical transmembrane segment at 145–161 (SLLGMLLAGFLIRNIPV) threads the bilayer. Topologically, residues 162-171 (INDNVQIKHK) are extracellular. The helical transmembrane segment at 172 to 189 (WSSSLRSIALSIILVRAG) threads the bilayer. The Cytoplasmic portion of the chain corresponds to 190–200 (LGLDSKALKKL). The helical transmembrane segment at 201–227 (KGVCVRLSMGPCIVEACTSALLAHYLL) threads the bilayer. The Extracellular portion of the chain corresponds to 228–233 (GLPWQW). A helical membrane pass occupies residues 234-242 (GFILGFVLG). At 243–270 (AVSPAVVVPSMLLLQGGGYGVEKGVPTL) the chain is on the cytoplasmic side. Positions 244, 275, 278, and 279 each coordinate Na(+). A helical membrane pass occupies residues 271–290 (LMAAGSFDDILAITGFNTCL). Residues 291–300 (GIAFSTGSTV) lie on the Extracellular side of the membrane. The helical transmembrane segment at 301–324 (FNVLRGVLEVVIGVATGSVLGFFI) threads the bilayer. Residues 325–339 (QYFPSRDQDKLVCKR) lie on the Cytoplasmic side of the membrane. Residues 340-357 (TFLVLGLSVLAVFSSVHF) traverse the membrane as a helical segment. Residues 358–361 (GFPG) are Extracellular-facing. A helical membrane pass occupies residues 362–373 (SGGLCTLVMAFL). Residues 374–390 (AGMGWTSEKAEVEKIIA) are Cytoplasmic-facing. The helical transmembrane segment at 391 to 411 (VAWDIFQPLLFGLIGAEVSIA) threads the bilayer. Over 412-417 (SLRPET) the chain is Extracellular. A helical transmembrane segment spans residues 418-440 (VGLCVATVGIAVLIRILTTFLMV). Topologically, residues 441 to 461 (CFAGFNLKEKIFISFAWLPKA) are cytoplasmic. The helical transmembrane segment at 462-473 (TVQAAIGSVALD) threads the bilayer. At 474-486 (TARSHGEKQLEDY) the chain is on the extracellular side. The helical transmembrane segment at 487 to 509 (GMDVLTVAFLSILITAPIGSLLI) threads the bilayer. Residues 510 to 537 (GLLGPRLLQKVEHQNKDEEVQGETSVQV) lie on the Cytoplasmic side of the membrane.

This sequence belongs to the monovalent cation:proton antiporter 1 (CPA1) transporter (TC 2.A.36) family. In terms of assembly, homodimer. Dimerization is essential for SLC9B2 activity. Lipids seem to play a role in the stabilization of the dimerization subdomain. Widely expressed. High levels detected in the distal tubules of the kidney nephron. Detected in red blood cells (at protein level).

It is found in the cell membrane. The protein localises to the mitochondrion membrane. The protein resides in the endosome membrane. Its subcellular location is the recycling endosome membrane. It localises to the cytoplasmic vesicle. It is found in the secretory vesicle. The protein localises to the synaptic vesicle membrane. The protein resides in the cell projection. Its subcellular location is the cilium. It localises to the flagellum membrane. It is found in the basolateral cell membrane. The protein localises to the apical cell membrane. It carries out the reaction Li(+)(out) + H(+)(in) = Li(+)(in) + H(+)(out). It catalyses the reaction Li(+)(in) + Na(+)(out) = Li(+)(out) + Na(+)(in). The catalysed reaction is Na(+)(in) + H(+)(out) = Na(+)(out) + H(+)(in). Allosterically inhibited by the N-terminal domain. Inhibited by phloretin. Electroneutral Na(+) Li(+)/H(+) antiporter that extrudes Na(+) or Li(+) in exchange for external protons across the membrane. Uses the proton gradient/membrane potential to extrude sodium. Contributes to the regulation of intracellular pH and sodium homeostasis. Also able to mediate Na(+)/Li(+) antiporter activity in kidney. May play a physiological role in renal tubular function and blood pressure homeostasis. Plays an important role for insulin secretion and clathrin-mediated endocytosis in beta-cells. Involved in sperm motility and fertility. It is controversial whether SLC9B2 plays a role in osteoclast differentiation or not. This chain is Sodium/hydrogen exchanger 9B2, found in Homo sapiens (Human).